The sequence spans 349 residues: MNTAAIDQTNARSLDSTTASMVDPFGRAVTYLRVSVTDRCDFRCTYCMAEHMTFLPKKDLLTLEELHRLCSAFIAKGVRKLRLTGGEPLVRKNIMFLIRELGKEIEAGRLDELTLTTNGSQLSKFAAELVDCGVRRINVSLDTLDPDKFRQITRWGELTKVLEGIDAALAAGLKVKINAVALKDFNDAEIPELMRWAHGRGMDLTLIETMPMGEVDEDRTDHYLPLSEMRKRLEADFTLKDMSYRTGGPARYVDVLETGGRLGLITPMTHNFCESCNRVRLTCTGTLYMCLGQNDAADLRSALRATEDDAYLAQVIDDAISRKPKGHDFIIDREHNRPAVARHMSVTGG.

Residues 24 to 249 (PFGRAVTYLR…KDMSYRTGGP (226 aa)) form the Radical SAM core domain. Arg-33 contacts GTP. [4Fe-4S] cluster contacts are provided by Cys-40 and Cys-44. An S-adenosyl-L-methionine-binding site is contributed by Tyr-46. Cys-47 is a [4Fe-4S] cluster binding site. Arg-82 contributes to the GTP binding site. Gly-86 is an S-adenosyl-L-methionine binding site. Residue Thr-116 participates in GTP binding. Ser-140 provides a ligand contact to S-adenosyl-L-methionine. Lys-176 lines the GTP pocket. An S-adenosyl-L-methionine-binding site is contributed by Met-210. Positions 273 and 276 each coordinate [4Fe-4S] cluster. Residue 278 to 280 (RVR) coordinates GTP. A [4Fe-4S] cluster-binding site is contributed by Cys-290.

The protein belongs to the radical SAM superfamily. MoaA family. Monomer and homodimer. [4Fe-4S] cluster is required as a cofactor.

It carries out the reaction GTP + AH2 + S-adenosyl-L-methionine = (8S)-3',8-cyclo-7,8-dihydroguanosine 5'-triphosphate + 5'-deoxyadenosine + L-methionine + A + H(+). It participates in cofactor biosynthesis; molybdopterin biosynthesis. Its function is as follows. Catalyzes the cyclization of GTP to (8S)-3',8-cyclo-7,8-dihydroguanosine 5'-triphosphate. The polypeptide is GTP 3',8-cyclase (Sinorhizobium medicae (strain WSM419) (Ensifer medicae)).